We begin with the raw amino-acid sequence, 306 residues long: Curved DNA-binding protein (306 aa).

One can recognise a J domain in the interval 5 to 69 (DYYAIMGVKP…QRRAEYDQMW (65 aa)).

It localises to the cytoplasm. Its subcellular location is the nucleoid. Its function is as follows. DNA-binding protein that preferentially recognizes a curved DNA sequence. It is probably a functional analog of DnaJ; displays overlapping activities with DnaJ, but functions under different conditions, probably acting as a molecular chaperone in an adaptive response to environmental stresses other than heat shock. Lacks autonomous chaperone activity; binds native substrates and targets them for recognition by DnaK. Its activity is inhibited by the binding of CbpM. The polypeptide is Curved DNA-binding protein (Escherichia coli O8 (strain IAI1)).